The chain runs to 200 residues: Large ribosomal subunit protein uL4 (200 aa).

The tract at residues 42 to 65 (TRAQKTRSDVSGGGAKPWRQKGTG) is disordered.

This sequence belongs to the universal ribosomal protein uL4 family. In terms of assembly, part of the 50S ribosomal subunit.

One of the primary rRNA binding proteins, this protein initially binds near the 5'-end of the 23S rRNA. It is important during the early stages of 50S assembly. It makes multiple contacts with different domains of the 23S rRNA in the assembled 50S subunit and ribosome. Functionally, forms part of the polypeptide exit tunnel. The protein is Large ribosomal subunit protein uL4 of Photobacterium profundum (strain SS9).